The chain runs to 687 residues: MVELSFSQLLVLLLSLLFLFTTLASSSKTPRFKYSLEKPHHPLDPLTTPEIKRVQTILSGHDPGFGSGSTIIHAMALDEPDKQRVIRWKKGDRLPPRRAEILAMSNGESHVLTVDLKSGRVVSDLVNPTFGYPILTMKDIIAVSQVPYKSVEFNRSIEARGIPFSGLICITPFAGWYGPDEEGRRVIKIQCFSKQDTVNFYMRPIEGLYLTVDMDKLEIIKIVDNGPVPVPKSTGTEYRYGFLNETVYMDRVNPMSMEQPDGPSFQVEDGYLVKWANWKFHIKPDQRAGMIISQATVRDSKTGEARSVMYKGFASELFVPNMDPGEGWYSKAYMDAGEFGLGPSSMPLVPLNDCPRNAYYIDGFFASPEGIPILQPNMICLFERYAGDTSWRHSEILLPGVDIRESRAKVTLVARMACSVGNYDYIFDWEFQMDGVIRVTVAASGMLMVKGTAYENVEDLGEKEDDSGPLISENVIGVVHDHFISFHLDMDIDGSANNSFVKVHLEKQRLPPGESRRKSYLKVKKYVAKTEKDAQIKMSLYDPYEFHLVNPNRLSRLGNPAGYKLVPGGNAASLLDHDDPPQMRGAFTNNQIWVTRYNRSEQWAGGLLMYQSRGEDTLQVWSDRDRSIENKDIVLWYTLGFHHVPCQEDFPVMPTIASSFELKPVNFFESNPVLGISPFFEKDLPVC.

A signal peptide spans 1–24 (MVELSFSQLLVLLLSLLFLFTTLA). N154 carries an N-linked (GlcNAc...) asparagine glycan. C169 and C191 are joined by a disulfide. Residue N244 is glycosylated (N-linked (GlcNAc...) asparagine). 333–344 (YMDAGEFGLGPS) contacts substrate. The active-site Proton acceptor is the D335. Cysteines 354 and 380 form a disulfide. Position 420 to 425 (420 to 425 (VGNYDY)) interacts with substrate. The active-site Schiff-base intermediate with substrate; via topaquinone is the Y423. Residue Y423 is modified to 2',4',5'-topaquinone. H480 and H482 together coordinate Cu cation. Positions 489, 490, and 491 each coordinate Mn(2+). N-linked (GlcNAc...) asparagine glycans are attached at residues N497 and N598. Mn(2+)-binding residues include D632 and I633. H643 is a Cu cation binding site.

This sequence belongs to the copper/topaquinone oxidase family. Homodimer. Cu cation serves as cofactor. Zn(2+) is required as a cofactor. The cofactor is L-topaquinone. Requires Mn(2+) as cofactor. Topaquinone (TPQ) is generated by copper-dependent autoxidation of a specific tyrosyl residue. As to expression, expressed in roots, leaves and cotyledons.

The protein resides in the secreted. It is found in the extracellular space. Its subcellular location is the apoplast. It catalyses the reaction a primary methyl amine + O2 + H2O = an aldehyde + H2O2 + NH4(+). Its pathway is amine and polyamine degradation; putrescine degradation. Functionally, copper amine oxidase that can use putrescine and spermidine as substrates. The sequence is that of Amine oxidase [copper-containing] gamma 2 from Arabidopsis thaliana (Mouse-ear cress).